A 470-amino-acid polypeptide reads, in one-letter code: 3-isopropylmalate dehydratase large subunit (470 aa).

Residues Cys349, Cys409, and Cys412 each coordinate [4Fe-4S] cluster.

This sequence belongs to the aconitase/IPM isomerase family. LeuC type 1 subfamily. As to quaternary structure, heterodimer of LeuC and LeuD. It depends on [4Fe-4S] cluster as a cofactor.

The enzyme catalyses (2R,3S)-3-isopropylmalate = (2S)-2-isopropylmalate. Its pathway is amino-acid biosynthesis; L-leucine biosynthesis; L-leucine from 3-methyl-2-oxobutanoate: step 2/4. Functionally, catalyzes the isomerization between 2-isopropylmalate and 3-isopropylmalate, via the formation of 2-isopropylmaleate. The chain is 3-isopropylmalate dehydratase large subunit from Methylobacterium radiotolerans (strain ATCC 27329 / DSM 1819 / JCM 2831 / NBRC 15690 / NCIMB 10815 / 0-1).